Consider the following 110-residue polypeptide: Inner membrane protein YgiZ (110 aa).

Topologically, residues 1-8 (MLKQKIKT) are cytoplasmic. The chain crosses the membrane as a helical span at residues 9–29 (IFEALLYIMLTYWLIDSFFAF). Over 30 to 53 (NKYDWMLESGGNICSIPSVSGEDR) the chain is Periplasmic. A helical transmembrane segment spans residues 54-74 (ILQAMIAAFFLLTPLIILILR). The Cytoplasmic segment spans residues 75–83 (KLFMREMFE). Residues 84 to 104 (FWVYVFSLGICLVCGWWLFWG) traverse the membrane as a helical segment. The Periplasmic portion of the chain corresponds to 105–110 (RFIFCY).

It localises to the cell inner membrane. The polypeptide is Inner membrane protein YgiZ (ygiZ) (Escherichia coli (strain K12)).